Here is an 84-residue protein sequence, read N- to C-terminus: Small ribosomal subunit protein bS20 (84 aa).

The interval 1–28 (MPNIKSAIKRVKTAETRNSRNASQRSAM) is disordered.

It belongs to the bacterial ribosomal protein bS20 family.

In terms of biological role, binds directly to 16S ribosomal RNA. This is Small ribosomal subunit protein bS20 from Listeria monocytogenes serotype 4b (strain CLIP80459).